Reading from the N-terminus, the 354-residue chain is Protein Wnt-8a (354 aa).

Positions 1–19 (MGHLLMLWVAAGMCYPALG) are cleaved as a signal peptide. The cysteines at positions 54 and 65 are disulfide-linked. A glycan (N-linked (GlcNAc...) asparagine) is linked at N103. 10 cysteine pairs are disulfide-bonded: C104–C112, C114–C132, C180–C194, C182–C189, C259–C297, C275–C290, C294–C336, C312–C327, C314–C324, and C319–C320. A lipid anchor (O-palmitoleoyl serine) is attached at S186. An N-linked (GlcNAc...) asparagine glycan is attached at N262.

Belongs to the Wnt family. As to quaternary structure, forms a soluble 1:1 complex with AFM; this prevents oligomerization and is required for prolonged biological activity. The complex with AFM may represent the physiological form in body fluids. Palmitoleoylation is required for efficient binding to frizzled receptors. Depalmitoleoylation leads to Wnt signaling pathway inhibition. In terms of processing, proteolytic processing by TIKI1 and TIKI2 promotes oxidation and formation of large disulfide-bond oligomers, leading to inactivation of WNT8A.

The protein resides in the secreted. Its subcellular location is the extracellular space. It localises to the extracellular matrix. In terms of biological role, ligand for members of the frizzled family of seven transmembrane receptors. Plays a role in embryonic patterning. This chain is Protein Wnt-8a (Wnt8a), found in Mus musculus (Mouse).